Consider the following 476-residue polypeptide: Glycogen synthase (476 aa).

ADP-alpha-D-glucose is bound at residue lysine 15.

This sequence belongs to the glycosyltransferase 1 family. Bacterial/plant glycogen synthase subfamily.

It carries out the reaction [(1-&gt;4)-alpha-D-glucosyl](n) + ADP-alpha-D-glucose = [(1-&gt;4)-alpha-D-glucosyl](n+1) + ADP + H(+). The protein operates within glycan biosynthesis; glycogen biosynthesis. Functionally, synthesizes alpha-1,4-glucan chains using ADP-glucose. In Haemophilus influenzae (strain PittGG), this protein is Glycogen synthase.